The primary structure comprises 253 residues: DNA polymerase sliding clamp (253 aa).

The protein belongs to the PCNA family. Homotrimer. The subunits circularize to form a toroid; DNA passes through its center. Replication factor C (RFC) is required to load the toroid on the DNA.

Sliding clamp subunit that acts as a moving platform for DNA processing. Responsible for tethering the catalytic subunit of DNA polymerase and other proteins to DNA during high-speed replication. The sequence is that of DNA polymerase sliding clamp from Methanopyrus kandleri (strain AV19 / DSM 6324 / JCM 9639 / NBRC 100938).